The sequence spans 261 residues: Cytochrome c oxidase subunit 3 (261 aa).

Residues M1–P15 lie on the Mitochondrial matrix side of the membrane. Residues W16–W34 traverse the membrane as a helical segment. The Mitochondrial intermembrane portion of the chain corresponds to F35 to M40. The helical transmembrane segment at T41–T66 threads the bilayer. Over F67–T72 the chain is Mitochondrial matrix. Residues P73 to S105 traverse the membrane as a helical segment. Residues L106 to E128 lie on the Mitochondrial intermembrane side of the membrane. Residues V129 to M152 form a helical membrane-spanning segment. Over E153–E155 the chain is Mitochondrial matrix. Residues R156–E183 traverse the membrane as a helical segment. Residues A184 to D190 lie on the Mitochondrial intermembrane side of the membrane. The helical transmembrane segment at G191–V223 threads the bilayer. Residues L224–H232 are Mitochondrial matrix-facing. A helical transmembrane segment spans residues F233–I256. The Mitochondrial intermembrane segment spans residues Y257–S261.

Belongs to the cytochrome c oxidase subunit 3 family. In terms of assembly, component of the cytochrome c oxidase (complex IV, CIV), a multisubunit enzyme composed of 14 subunits. The complex is composed of a catalytic core of 3 subunits MT-CO1, MT-CO2 and MT-CO3, encoded in the mitochondrial DNA, and 11 supernumerary subunits COX4I, COX5A, COX5B, COX6A, COX6B, COX6C, COX7A, COX7B, COX7C, COX8 and NDUFA4, which are encoded in the nuclear genome. The complex exists as a monomer or a dimer and forms supercomplexes (SCs) in the inner mitochondrial membrane with NADH-ubiquinone oxidoreductase (complex I, CI) and ubiquinol-cytochrome c oxidoreductase (cytochrome b-c1 complex, complex III, CIII), resulting in different assemblies (supercomplex SCI(1)III(2)IV(1) and megacomplex MCI(2)III(2)IV(2)).

It localises to the mitochondrion inner membrane. It catalyses the reaction 4 Fe(II)-[cytochrome c] + O2 + 8 H(+)(in) = 4 Fe(III)-[cytochrome c] + 2 H2O + 4 H(+)(out). Component of the cytochrome c oxidase, the last enzyme in the mitochondrial electron transport chain which drives oxidative phosphorylation. The respiratory chain contains 3 multisubunit complexes succinate dehydrogenase (complex II, CII), ubiquinol-cytochrome c oxidoreductase (cytochrome b-c1 complex, complex III, CIII) and cytochrome c oxidase (complex IV, CIV), that cooperate to transfer electrons derived from NADH and succinate to molecular oxygen, creating an electrochemical gradient over the inner membrane that drives transmembrane transport and the ATP synthase. Cytochrome c oxidase is the component of the respiratory chain that catalyzes the reduction of oxygen to water. Electrons originating from reduced cytochrome c in the intermembrane space (IMS) are transferred via the dinuclear copper A center (CU(A)) of subunit 2 and heme A of subunit 1 to the active site in subunit 1, a binuclear center (BNC) formed by heme A3 and copper B (CU(B)). The BNC reduces molecular oxygen to 2 water molecules using 4 electrons from cytochrome c in the IMS and 4 protons from the mitochondrial matrix. The protein is Cytochrome c oxidase subunit 3 (mt-co3) of Danio rerio (Zebrafish).